The chain runs to 405 residues: Acetate kinase (405 aa).

Asn10 is a Mg(2+) binding site. ATP is bound at residue Lys17. Arg93 contributes to the substrate binding site. Asp150 serves as the catalytic Proton donor/acceptor. ATP contacts are provided by residues 210–214 (HLGNG), 284–286 (DMR), and 332–336 (GVGEN). Glu386 serves as a coordination point for Mg(2+).

The protein belongs to the acetokinase family. As to quaternary structure, homodimer. Mg(2+) serves as cofactor. Requires Mn(2+) as cofactor.

It localises to the cytoplasm. It carries out the reaction acetate + ATP = acetyl phosphate + ADP. Its pathway is metabolic intermediate biosynthesis; acetyl-CoA biosynthesis; acetyl-CoA from acetate: step 1/2. Catalyzes the formation of acetyl phosphate from acetate and ATP. Can also catalyze the reverse reaction. This chain is Acetate kinase, found in Streptomyces avermitilis (strain ATCC 31267 / DSM 46492 / JCM 5070 / NBRC 14893 / NCIMB 12804 / NRRL 8165 / MA-4680).